The sequence spans 374 residues: Tuliposide A-converting enzyme b2, amyloplastic (374 aa).

An amyloplast-targeting transit peptide spans 1–68; sequence MSVALFCGPP…TNSSLSPSPT (68 aa). Serine 226 functions as the Acyl-ester intermediate in the catalytic mechanism. Residues aspartate 316 and histidine 348 each act as charge relay system in the active site.

The protein belongs to the AB hydrolase superfamily. As to quaternary structure, homodimer. As to expression, highly expressed in pistil and bulb scales. Lower expression in stem, and barely detected in root, leaf, petal and stamen.

The protein resides in the plastid. It localises to the amyloplast. It carries out the reaction 6-tuliposide A = tulipalin A + D-glucose. Functionally, lactone-forming carboxylesterases, specifically catalyzing intramolecular transesterification, but not hydrolysis. Involved in the biosynthesis of tulipalins, defensive chemicals that show antimicrobial activities against a broad range of strains of bacteria and fungi. Substrates are 6-tuliposide A &gt; 6-tuliposide B. In Tulipa gesneriana (Garden tulip), this protein is Tuliposide A-converting enzyme b2, amyloplastic (TCEA-B2).